Consider the following 164-residue polypeptide: Ubiquitin-fold modifier-conjugating enzyme 1 (164 aa).

Cysteine 116 functions as the Glycyl thioester intermediate in the catalytic mechanism.

It belongs to the ubiquitin-conjugating enzyme family. UFC1 subfamily.

Functionally, E2-like enzyme which forms an intermediate with UFM1 via a thioester linkage. This is Ubiquitin-fold modifier-conjugating enzyme 1 from Drosophila erecta (Fruit fly).